The following is a 242-amino-acid chain: ATP synthase subunit a (242 aa).

A run of 6 helical transmembrane segments spans residues S29–Y49, F84–T104, I114–V134, F140–I160, M181–L201, and F203–Q223.

It belongs to the ATPase A chain family. F-type ATPases have 2 components, CF(1) - the catalytic core - and CF(0) - the membrane proton channel. CF(1) has five subunits: alpha(3), beta(3), gamma(1), delta(1), epsilon(1). CF(0) has three main subunits: a(1), b(2) and c(9-12). The alpha and beta chains form an alternating ring which encloses part of the gamma chain. CF(1) is attached to CF(0) by a central stalk formed by the gamma and epsilon chains, while a peripheral stalk is formed by the delta and b chains.

It is found in the cell inner membrane. Key component of the proton channel; it plays a direct role in the translocation of protons across the membrane. This chain is ATP synthase subunit a, found in Rickettsia akari (strain Hartford).